Reading from the N-terminus, the 812-residue chain is Hyaluronate lyase HylB (812 aa).

Residues 1–32 (MFGTPSRRTFLTASALSAMALAASPTVTDAIA) constitute a signal peptide (tat-type signal). Active-site residues include Asn222, His272, and Tyr281.

This sequence belongs to the polysaccharide lyase 8 family. In terms of processing, predicted to be exported by the Tat system. The position of the signal peptide cleavage has been experimentally proven.

The protein localises to the secreted. The catalysed reaction is [hyaluronan](n) = n 3-(4-deoxy-beta-D-gluc-4-enuronosyl)-N-acetyl-D-glucosamine + H2O. Functionally, degrades hyaluronic acid (HA) exclusively into HA disaccharides (HA-2). Produced HA-2s confer anti-inflammatory properties leading to reduced immunopathology in the mouse model of acne. The polypeptide is Hyaluronate lyase HylB (Cutibacterium acnes (Propionibacterium acnes)).